Here is a 395-residue protein sequence, read N- to C-terminus: RNA polymerase II elongation factor ELL3 (395 aa).

Disordered regions lie at residues 124–149 (SSLQ…DYPE), 163–182 (VPDP…SREH), 194–218 (LPNR…KRPA), and 233–279 (LAPS…SLSP). The span at 130–140 (NRTEDARDRES) shows a compositional bias: basic and acidic residues. Residues 168 to 177 (ASSQGQSLPG) show a composition bias toward polar residues. Residues 246-258 (LQEEDWEQEDKDE) show a composition bias toward acidic residues. The segment covering 268–277 (PSVQADSESL) has biased composition (polar residues). One can recognise an OCEL domain in the interval 283–393 (PDYLLQYRAI…LILEFEEKNR (111 aa)).

Belongs to the ELL/occludin family. As to quaternary structure, interacts with AFF4. Component of the super elongation complex (SEC), at least composed of EAF1, EAF2, CDK9, MLLT3/AF9, AFF (AFF1 or AFF4), the P-TEFb complex and ELL (ELL, ELL2 or ELL3). Component of the little elongation complex (LEC), at least composed of ELL (ELL, ELL2 or ELL3), ZC3H8, ICE1 and ICE2.

It localises to the nucleus. Enhancer-binding elongation factor that specifically binds enhancers in embryonic stem cells (ES cells), marks them, and is required for their future activation during stem cell specification. Elongation factor component of the super elongation complex (SEC), a complex required to increase the catalytic rate of RNA polymerase II transcription by suppressing transient pausing by the polymerase at multiple sites along the DNA. Component of the little elongation complex (LEC), a complex required to regulate small nuclear RNA (snRNA) gene transcription by RNA polymerase II and III. Does not only bind to enhancer regions of active genes, but also marks the enhancers that are in a poised or inactive state in ES cells and is required for establishing proper RNA polymerase II occupancy at developmentally regulated genes in a cohesin-dependent manner. Probably required for priming developmentally regulated genes for later recruitment of the super elongation complex (SEC), for transcriptional activation during differentiation. Required for recruitment of P-TEFb within SEC during differentiation. Probably preloaded on germ cell chromatin, suggesting that it may prime gene activation by marking enhancers as early as in the germ cells. Promoting epithelial-mesenchymal transition (EMT). In Bos taurus (Bovine), this protein is RNA polymerase II elongation factor ELL3 (ELL3).